The following is a 249-amino-acid chain: Triosephosphate isomerase (249 aa).

11-13 contacts substrate; the sequence is NWK. The Electrophile role is filled by His-91. Residue Glu-163 is the Proton acceptor of the active site. Substrate-binding positions include Gly-169, Ser-208, and 229 to 230; that span reads GG.

Belongs to the triosephosphate isomerase family. In terms of assembly, homodimer.

Its subcellular location is the cytoplasm. It catalyses the reaction D-glyceraldehyde 3-phosphate = dihydroxyacetone phosphate. It participates in carbohydrate biosynthesis; gluconeogenesis. It functions in the pathway carbohydrate degradation; glycolysis; D-glyceraldehyde 3-phosphate from glycerone phosphate: step 1/1. Functionally, involved in the gluconeogenesis. Catalyzes stereospecifically the conversion of dihydroxyacetone phosphate (DHAP) to D-glyceraldehyde-3-phosphate (G3P). In Pseudoalteromonas translucida (strain TAC 125), this protein is Triosephosphate isomerase.